We begin with the raw amino-acid sequence, 245 residues long: 1-(5-phosphoribosyl)-5-[(5-phosphoribosylamino)methylideneamino] imidazole-4-carboxamide isomerase (245 aa).

The Proton acceptor role is filled by Asp7. The Proton donor role is filled by Asp129.

It belongs to the HisA/HisF family.

It is found in the cytoplasm. The catalysed reaction is 1-(5-phospho-beta-D-ribosyl)-5-[(5-phospho-beta-D-ribosylamino)methylideneamino]imidazole-4-carboxamide = 5-[(5-phospho-1-deoxy-D-ribulos-1-ylimino)methylamino]-1-(5-phospho-beta-D-ribosyl)imidazole-4-carboxamide. Its pathway is amino-acid biosynthesis; L-histidine biosynthesis; L-histidine from 5-phospho-alpha-D-ribose 1-diphosphate: step 4/9. This is 1-(5-phosphoribosyl)-5-[(5-phosphoribosylamino)methylideneamino] imidazole-4-carboxamide isomerase from Shewanella sp. (strain MR-4).